Reading from the N-terminus, the 211-residue chain is MTIQQELHTILVQGLDALSLELSERQQQQLVDYVLLMDKWNKAYNLTSVRDPKQMMVKHILDSLAIVPHLEGDNIIDVGTGPGLPGMPLAIAFPEKRFTLLDSLGKRVRFMTQSVHTLGLKNVTPVQSRVEAHNGEVPYDIVLSRAFASLKDMLHWCQHLVDSEGQFLALKGQFPQDEIEEVSDHFHVSKTENLTVPNLVGERHLVWLKKK.

S-adenosyl-L-methionine contacts are provided by residues G79, L84, 130–131 (VE), and R145.

This sequence belongs to the methyltransferase superfamily. RNA methyltransferase RsmG family.

It localises to the cytoplasm. It catalyses the reaction guanosine(527) in 16S rRNA + S-adenosyl-L-methionine = N(7)-methylguanosine(527) in 16S rRNA + S-adenosyl-L-homocysteine. Specifically methylates the N7 position of guanine in position 527 of 16S rRNA. The protein is Ribosomal RNA small subunit methyltransferase G of Alteromonas mediterranea (strain DSM 17117 / CIP 110805 / LMG 28347 / Deep ecotype).